A 244-amino-acid polypeptide reads, in one-letter code: NAD-dependent protein deacetylase (244 aa).

Positions 1–244 (MDDKINKLKE…IGKVLGKVID (244 aa)) constitute a Deacetylase sirtuin-type domain. 8 residues coordinate NAD(+): alanine 24, threonine 28, phenylalanine 35, arginine 36, glutamine 105, isoleucine 107, aspartate 108, and histidine 123. Phenylalanine 35 provides a ligand contact to nicotinamide. Isoleucine 107 and aspartate 108 together coordinate nicotinamide. Histidine 123 functions as the Proton acceptor in the catalytic mechanism. Cysteine 131, cysteine 134, cysteine 152, and cysteine 155 together coordinate Zn(2+). Residues threonine 193, serine 194, asparagine 217, and isoleucine 235 each coordinate NAD(+).

Belongs to the sirtuin family. Class U subfamily. It depends on Zn(2+) as a cofactor.

Its subcellular location is the cytoplasm. It catalyses the reaction N(6)-acetyl-L-lysyl-[protein] + NAD(+) + H2O = 2''-O-acetyl-ADP-D-ribose + nicotinamide + L-lysyl-[protein]. Functionally, NAD-dependent protein deacetylase which modulates the activities of several enzymes which are inactive in their acetylated form. The chain is NAD-dependent protein deacetylase from Clostridium perfringens (strain 13 / Type A).